The sequence spans 472 residues: Serine/threonine-protein phosphatase T (472 aa).

TPR repeat units lie at residues 7–40, 41–73, and 74–107; these read ADKL…TKTP, TLFC…EPTF, and AKAY…APQN. Residues Asp-217, His-219, Asp-246, and Asn-278 each contribute to the Mn(2+) site. The active-site Proton donor/acceptor is His-279. Mn(2+) contacts are provided by His-327 and His-403.

Belongs to the PPP phosphatase family. PP-5 (PP-T) subfamily. The cofactor is Mg(2+). Mn(2+) is required as a cofactor.

It is found in the cytoplasm. The protein resides in the cytosol. It localises to the nucleus. It catalyses the reaction O-phospho-L-seryl-[protein] + H2O = L-seryl-[protein] + phosphate. The catalysed reaction is O-phospho-L-threonyl-[protein] + H2O = L-threonyl-[protein] + phosphate. With respect to regulation, activated by arachidonic acid. In terms of biological role, may function as a protein phosphatase. The sequence is that of Serine/threonine-protein phosphatase T from Trypanosoma brucei brucei (strain 927/4 GUTat10.1).